The sequence spans 718 residues: Potassium channel KAT1 (718 aa).

Residues 1-60 (MTQAHSKSCFHQFWDGLQIKRSSDSFTVELLPSLGATINHSNKLQKFIISPYDPRYRSWE) lie on the Cytoplasmic side of the membrane. The chain crosses the membrane as a helical span at residues 61–81 (LFLIVLVVYSAWICPFELAFL). At 82-88 (RDLPSKL) the chain is on the extracellular side. Residues 89–109 (LLVENIVDIFFAIDIVLTFFV) form a helical membrane-spanning segment. The Cytoplasmic portion of the chain corresponds to 110-132 (AYVDSKTHLLVDDRKRIAMRYLS). The helical transmembrane segment at 133–153 (TWFIFDVCSTAPFQPIILLFT) threads the bilayer. At 154-162 (HKGNDIAFK) the chain is on the extracellular side. A helical; Voltage-sensor transmembrane segment spans residues 163–183 (VLNLLRLWRLHRVSSLFARLE). The Cytoplasmic segment spans residues 184-197 (KDIRFNYFWTRCSK). The chain crosses the membrane as a helical span at residues 198 to 218 (LISVTLFAVHCAGCFNYMIAD). At 219–245 (RYPNPEKTWIGAVMSTFRSESLWTRYI) the chain is on the extracellular side. An intramembrane region (pore-forming) is located at residues 246–265 (TALYWSITTLTTTGYGDLHA). Residues 266 to 269 (ENPT) lie on the Extracellular side of the membrane. The helical transmembrane segment at 270 to 290 (EMLFDIVYMMFNLGLTAYLIG) threads the bilayer. The Cytoplasmic portion of the chain corresponds to 291-718 (NMTNLVVHGT…DGDHLFLLEM (428 aa)). An a nucleoside 3',5'-cyclic phosphate-binding site is contributed by 374-493 (LFNGVSGNFI…NILMNNLVQK (120 aa)). The tract at residues 560–584 (EATRSSASENENSSMTDKEENHDEV) is disordered. Residues 562-574 (TRSSASENENSSM) are compositionally biased toward polar residues. Over residues 575–584 (TDKEENHDEV) the composition is skewed to basic and acidic residues. The KHA domain maps to 647–718 (RVTIHKYRHN…DGDHLFLLEM (72 aa)).

It belongs to the potassium channel family. Plant (TC 1.A.1.4) subfamily.

The protein resides in the membrane. In terms of biological role, probable inward-rectifying potassium channel. Assuming opened or closed conformations in response to the voltage difference across the membrane, the channel is activated by hyperpolarization. The protein is Potassium channel KAT1 of Oryza sativa subsp. japonica (Rice).